The following is a 128-amino-acid chain: Hemoglobin subunit beta-1 (128 aa).

A Globin domain is found at 2–128 (HWTAEEKALV…VVDALSKGYH (127 aa)). Heme b is bound by residues His-51 and His-74.

This sequence belongs to the globin family. In terms of assembly, hb 1 is a heterotetramer of two alpha and two beta-1 chains. As to expression, red blood cells (at protein level).

Its function is as follows. Involved in oxygen transport from gills to the various peripheral tissues. This chain is Hemoglobin subunit beta-1, found in Somniosus microcephalus (Greenland sleeper shark).